Consider the following 686-residue polypeptide: Translation initiation factor IF-2 (686 aa).

Positions 54–105 (KPSVADEFEVEEKVVRSKKNSNKKKKKGKGNEDKRQENFAGRQQTQTVETPD) are disordered. Residues 69-81 (RSKKNSNKKKKKG) are compositionally biased toward basic residues. One can recognise a tr-type G domain in the interval 188–357 (ERPAVVTIMG…LLVSEVEEYK (170 aa)). Positions 197-204 (GHVDHGKT) are G1. 197–204 (GHVDHGKT) contacts GTP. The G2 stretch occupies residues 222 to 226 (GITQH). The G3 stretch occupies residues 243–246 (DTPG). Residues 243–247 (DTPGH) and 297–300 (NKMD) each bind GTP. The segment at 297–300 (NKMD) is G4. A G5 region spans residues 333 to 335 (SAI).

This sequence belongs to the TRAFAC class translation factor GTPase superfamily. Classic translation factor GTPase family. IF-2 subfamily.

The protein localises to the cytoplasm. Its function is as follows. One of the essential components for the initiation of protein synthesis. Protects formylmethionyl-tRNA from spontaneous hydrolysis and promotes its binding to the 30S ribosomal subunits. Also involved in the hydrolysis of GTP during the formation of the 70S ribosomal complex. The polypeptide is Translation initiation factor IF-2 (Bacillus cereus (strain 03BB102)).